Reading from the N-terminus, the 340-residue chain is MITLQNVVKEYTSRNNKVLAVDHVDLEIEQGEIFGVVGYSGAGKSTLIRMFNGLELPSAGTVEVDNLLISQIRGSKLRKARQQIGMIFQHFNLLWSRTVAENIAFPLEIAGVRGEKRRFRVNELIRLVGLEGKENAYPSELSGGQKQRVGIARALANNPKVLLCDEATSALDPQTTDEVLELLLDINKRLHLTIIVITHEMHVIRKICNRVAVMENGKVVELGDVLDVFRHPQEKVTQRFVRQVTDSDETEELIHLLLDNYAEGKIVKLLFMSENATQPVISQVAKENDVMLNVLHGNLTQTQNGAYGTLYVQVLGTEDAINASLTQLRQLKVETEVLER.

Residues 2-241 enclose the ABC transporter domain; that stretch reads ITLQNVVKEY…PQEKVTQRFV (240 aa). 38 to 45 contributes to the ATP binding site; sequence GYSGAGKS.

The protein belongs to the ABC transporter superfamily. Methionine importer (TC 3.A.1.24) family. In terms of assembly, the complex is composed of two ATP-binding proteins (MetN), two transmembrane proteins (MetI) and a solute-binding protein (MetQ).

It is found in the cell membrane. The enzyme catalyses L-methionine(out) + ATP + H2O = L-methionine(in) + ADP + phosphate + H(+). The catalysed reaction is D-methionine(out) + ATP + H2O = D-methionine(in) + ADP + phosphate + H(+). Part of the ABC transporter complex MetNIQ involved in methionine import. Responsible for energy coupling to the transport system. The sequence is that of Methionine import ATP-binding protein MetN 2 from Listeria monocytogenes serotype 4b (strain F2365).